A 174-amino-acid polypeptide reads, in one-letter code: RNA pyrophosphohydrolase (174 aa).

The Nudix hydrolase domain occupies Gly-6 to Lys-149. Residues Gly-38 to Gly-59 carry the Nudix box motif.

The protein belongs to the Nudix hydrolase family. RppH subfamily. A divalent metal cation is required as a cofactor.

Its function is as follows. Accelerates the degradation of transcripts by removing pyrophosphate from the 5'-end of triphosphorylated RNA, leading to a more labile monophosphorylated state that can stimulate subsequent ribonuclease cleavage. This chain is RNA pyrophosphohydrolase, found in Neisseria meningitidis serogroup C (strain 053442).